We begin with the raw amino-acid sequence, 309 residues long: Probable manganese-dependent inorganic pyrophosphatase (309 aa).

6 residues coordinate Mn(2+): His-9, Asp-13, Asp-15, Asp-75, His-97, and Asp-149.

The protein belongs to the PPase class C family. It depends on Mn(2+) as a cofactor.

Its subcellular location is the cytoplasm. The catalysed reaction is diphosphate + H2O = 2 phosphate + H(+). The chain is Probable manganese-dependent inorganic pyrophosphatase from Bacillus cereus (strain 03BB102).